A 343-amino-acid chain; its full sequence is CCN family member 3 (343 aa).

The N-terminal stretch at 1–18 (MTPHLALCFILLIQQVAS) is a signal peptide. Residues 19-90 (QKCPSQCDQC…RMETGTCMAL (72 aa)) form the IGFBP N-terminal domain. 6 cysteine pairs are disulfide-bonded: Cys21–Cys46, Cys25–Cys48, Cys28–Cys49, Cys35–Cys52, Cys60–Cys74, and Cys66–Cys87. Residues 93–159 (NSCVFDGVVY…GECCEKWVCD (67 aa)) form the VWFC domain. In terms of domain architecture, TSP type-1 spans 190-235 (ACIAQTTEWSACSKTCGMGVSSRVTNRNARCEMQKQIRLCMVRSCE). Cystine bridges form between Cys249–Cys286, Cys266–Cys300, Cys277–Cys316, Cys280–Cys318, and Cys285–Cys322. Residues 249–323 (CVRVRKTTKP…STCVCHYNCP (75 aa)) form the CTCK domain. Asn265 is a glycosylation site (N-linked (GlcNAc...) asparagine).

Belongs to the CCN family.

It localises to the secreted. Its subcellular location is the cytoplasm. The protein localises to the cell junction. The protein resides in the gap junction. Functionally, immediate-early protein playing a role in various cellular processes including proliferation, adhesion, migration, differentiation and survival. Acts by binding to integrins or membrane receptors such as NOTCH1. The polypeptide is CCN family member 3 (ccn3) (Xenopus laevis (African clawed frog)).